We begin with the raw amino-acid sequence, 203 residues long: Ponticulin-like protein H (203 aa).

An N-terminal signal peptide occupies residues 1 to 20 (MKLLNSLVLLAALCAITANG). Asn58 carries an N-linked (GlcNAc...) asparagine glycan. The span at 127–168 (SDSTNPTSTPSTTPSATPTVTPSTTPTVTPTVTPSTTPTVAP) shows a compositional bias: low complexity. Residues 127–183 (SDSTNPTSTPSTTPSATPTVTPSTTPTVTPTVTPSTTPTVAPTVPPTTPPSTTTGSG) form a disordered region. A lipid anchor (GPI-like-anchor amidated serine) is attached at Ser182. Residues 183–203 (GSTVVASFGLIVSILLASLAL) constitute a propeptide, removed in mature form.

This sequence belongs to the ponticulin family. The GPI-like-anchor contains a phosphoceramide group, rather than a phosphatidyl group.

The protein localises to the cell membrane. In terms of biological role, binds F-actin and nucleates actin assembly. The sequence is that of Ponticulin-like protein H (ponH) from Dictyostelium discoideum (Social amoeba).